The chain runs to 83 residues: Bowman-Birk type seed trypsin and chymotrypsin inhibitor (83 aa).

7 cysteine pairs are disulfide-bonded: Cys-18–Cys-72, Cys-19–Cys-34, Cys-22–Cys-68, Cys-24–Cys-32, Cys-42–Cys-49, Cys-46–Cys-61, and Cys-51–Cys-59.

It belongs to the Bowman-Birk serine protease inhibitor family.

In Vigna unguiculata (Cowpea), this protein is Bowman-Birk type seed trypsin and chymotrypsin inhibitor.